Reading from the N-terminus, the 339-residue chain is Fructose-1,6-bisphosphatase, cytosolic (339 aa).

Mg(2+) contacts are provided by glutamate 71, glutamate 100, aspartate 121, leucine 123, and aspartate 124. Residues 124-127 (DGSS), asparagine 215, tyrosine 247, tyrosine 267, and lysine 277 each bind substrate. Glutamate 283 contacts Mg(2+).

It belongs to the FBPase class 1 family. Mg(2+) serves as cofactor.

It localises to the cytoplasm. It catalyses the reaction beta-D-fructose 1,6-bisphosphate + H2O = beta-D-fructose 6-phosphate + phosphate. This is Fructose-1,6-bisphosphatase, cytosolic from Oryza sativa subsp. indica (Rice).